We begin with the raw amino-acid sequence, 233 residues long: Ion-translocating oxidoreductase complex subunit E (233 aa).

Helical transmembrane passes span 18 to 38 (ALVQ…ATNA), 39 to 59 (LGLG…VSAL), 69 to 89 (IPIY…LINA), 92 to 112 (FGLY…CIVI), 128 to 148 (ALDG…LGAL), and 182 to 202 (PFLL…LLAG).

This sequence belongs to the NqrDE/RnfAE family. As to quaternary structure, the complex is composed of six subunits: RnfA, RnfB, RnfC, RnfD, RnfE and RnfG.

Its subcellular location is the cell inner membrane. Its function is as follows. Part of a membrane-bound complex that couples electron transfer with translocation of ions across the membrane. The chain is Ion-translocating oxidoreductase complex subunit E from Yersinia pestis bv. Antiqua (strain Angola).